An 802-amino-acid chain; its full sequence is MKTKWLISVIILFVFIFPQNLVFAGEDKNEGVKVVRDNFGVPHLYAKNKKDLYEAYGYVMAKDRLFQLEMFRRGNEGTVSEIFGEDYLSKDEQSRRDGYSNKEIKKMIDGLDRQPKELIAKFAEGISRYVNEALKDPDDKLSKEFHEYQFLPQKWTSTDVVRVYMVSMTYFMDNHQELKNAEILAKLEHEYGTEVSRKMFDDLVWKNDPSAPTSIVSEGKPKRDSSSQSLQILSSAVIKASEKVGKERENFVQTSEELGLPLKIGSNAAIVGSEKSATGNALLFSGPQVGFVAPGFLYEVGLHAPGFDMEGSGFIGYPFIMFGANNHFALSATAGYGNVTDIFEEKLNAKNSSQYLYKGKWRDMEKRKESFTVKGDNGEKKTVEKIYYRTVHGPVISRDETNKVAYSKSWSFRGTEAQSMSAYMKANWAKNLKEFENAASEYTMSLNWYYADKKGDIAYYHVGRYPVRNSKIDERIPTPGTGEYEWKGFIPFKENPHVINPKNGYVVNWNNKPSKEWVNGEYSFYWGEDNRVQQYINGMEARGKVTLEDINEINYTASFAQLRANLFKQLLIDVLDKNKSTNGNYIYLIEKLEEWNNLKEDENKDGYYDAGIAAFFDEWWNNLHDKLFMDELGDFYGITKEITDHRYGASLAYKILNKESTNYKWVNVDQEKIIMESTNEVLAKLQSEKGLKAEKWRMPIKTMTFGEKSLIGIPHGYGSMTPIIEMNRGSENHYIEMTPTGPSGFNITPPGQIGFVKKDGTISDHYDDQLVMFAEWKFKPYLFNKKDINKAAKNVSALNMSK.

The N-terminal stretch at 1 to 24 (MKTKWLISVIILFVFIFPQNLVFA) is a signal peptide. Residue Glu177 coordinates Ca(2+). The propeptide at 235-265 (SAVIKASEKVGKERENFVQTSEELGLPLKIG) is spacer peptide. Ser266 serves as the catalytic Nucleophile. Asp341 serves as a coordination point for Ca(2+).

The protein belongs to the peptidase S45 family. Heterodimer of an alpha subunit and a beta subunit processed from the same precursor. Ca(2+) serves as cofactor.

Its subcellular location is the secreted. The catalysed reaction is a penicillin + H2O = 6-aminopenicillanate + a carboxylate. This chain is Penicillin G acylase (pac), found in Priestia megaterium (Bacillus megaterium).